The sequence spans 350 residues: Lipase chaperone (350 aa).

Residues 12-32 (IVLYLILGCVVVCGVWYSFDV) form a helical membrane-spanning segment.

The protein belongs to the lipase chaperone family.

The protein resides in the cell inner membrane. May be involved in the folding of the extracellular lipase during its passage through the periplasm. This Xylella fastidiosa (strain 9a5c) protein is Lipase chaperone (lifO).